The primary structure comprises 278 residues: Shikimate dehydrogenase (NADP(+)) (278 aa).

Residues 15 to 17 (SMS) and Thr62 contribute to the shikimate site. Lys66 acts as the Proton acceptor in catalysis. NADP(+) is bound at residue Glu78. Shikimate contacts are provided by Asn87 and Asp102. NADP(+)-binding positions include 127 to 131 (GAGGA), 151 to 156 (NRTPEK), and Ile217. A shikimate-binding site is contributed by Tyr219. Position 240 (Gly240) interacts with NADP(+).

It belongs to the shikimate dehydrogenase family. Homodimer.

The enzyme catalyses shikimate + NADP(+) = 3-dehydroshikimate + NADPH + H(+). It participates in metabolic intermediate biosynthesis; chorismate biosynthesis; chorismate from D-erythrose 4-phosphate and phosphoenolpyruvate: step 4/7. Functionally, involved in the biosynthesis of the chorismate, which leads to the biosynthesis of aromatic amino acids. Catalyzes the reversible NADPH linked reduction of 3-dehydroshikimate (DHSA) to yield shikimate (SA). The sequence is that of Shikimate dehydrogenase (NADP(+)) from Bacillus licheniformis (strain ATCC 14580 / DSM 13 / JCM 2505 / CCUG 7422 / NBRC 12200 / NCIMB 9375 / NCTC 10341 / NRRL NRS-1264 / Gibson 46).